Here is a 309-residue protein sequence, read N- to C-terminus: Glutaminase (309 aa).

Serine 64, asparagine 114, glutamate 160, asparagine 167, tyrosine 191, tyrosine 243, and valine 261 together coordinate substrate.

It belongs to the glutaminase family. As to quaternary structure, homotetramer.

The enzyme catalyses L-glutamine + H2O = L-glutamate + NH4(+). This chain is Glutaminase, found in Methylorubrum populi (strain ATCC BAA-705 / NCIMB 13946 / BJ001) (Methylobacterium populi).